The following is a 115-amino-acid chain: U3-lycotoxin-Ls1s (115 aa).

A signal peptide spans 1–20; the sequence is MKFVLLFGVFLLTLFSYSSS. A propeptide spanning residues 21–44 is cleaved from the precursor; it reads EMLDDFDQADEDELLSLIEKEEAR. Cystine bridges form between cysteine 48-cysteine 63, cysteine 55-cysteine 72, cysteine 62-cysteine 87, and cysteine 74-cysteine 85.

This sequence belongs to the neurotoxin 19 (CSTX) family. 01 subfamily. In terms of tissue distribution, expressed by the venom gland.

It localises to the secreted. This is U3-lycotoxin-Ls1s from Lycosa singoriensis (Wolf spider).